The primary structure comprises 181 residues: Adenine phosphoribosyltransferase (181 aa).

The protein belongs to the purine/pyrimidine phosphoribosyltransferase family. In terms of assembly, homodimer.

The protein localises to the cytoplasm. The catalysed reaction is AMP + diphosphate = 5-phospho-alpha-D-ribose 1-diphosphate + adenine. Its pathway is purine metabolism; AMP biosynthesis via salvage pathway; AMP from adenine: step 1/1. Catalyzes a salvage reaction resulting in the formation of AMP, that is energically less costly than de novo synthesis. This is Adenine phosphoribosyltransferase from Shewanella loihica (strain ATCC BAA-1088 / PV-4).